Consider the following 353-residue polypeptide: MFKIAPLNNQFDHLIHNKINNKTKPLGALGQLELIALQLVKILSQTIKSDVEFTAFKAEICNPTLVVFAGDHGIAAQGVSIAPSEVTAQMVANFVAGGAAINIFCQQLGWQLEVVDCGILEKSPASKVHDCRLGNITAPLNLHMAMSTAQVKQGFSNAKSLVLQLKQQGCNTLAMGEMGIGNTTSAAAIMAAILNLPVTQCVGRGTGVSDELIARKINVVEQALQLHKAHLADPIALLAAVGGFEIVHITGAMLAAAEQGMAVIVDGFICSAAAMVAIKINPIVKEYLIFAHCSNEQGHQQMLSKLEVKPLLQLDLRLGEGTGAALSLPLLQAALGFYNHMASFADAGVEQVV.

Catalysis depends on Glu320, which acts as the Proton acceptor.

The protein belongs to the CobT family.

It catalyses the reaction 5,6-dimethylbenzimidazole + nicotinate beta-D-ribonucleotide = alpha-ribazole 5'-phosphate + nicotinate + H(+). It participates in nucleoside biosynthesis; alpha-ribazole biosynthesis; alpha-ribazole from 5,6-dimethylbenzimidazole: step 1/2. Its function is as follows. Catalyzes the synthesis of alpha-ribazole-5'-phosphate from nicotinate mononucleotide (NAMN) and 5,6-dimethylbenzimidazole (DMB). The chain is Nicotinate-nucleotide--dimethylbenzimidazole phosphoribosyltransferase from Pseudoalteromonas translucida (strain TAC 125).